The following is a 208-amino-acid chain: Probable nicotinate-nucleotide adenylyltransferase (208 aa).

It belongs to the NadD family.

It carries out the reaction nicotinate beta-D-ribonucleotide + ATP + H(+) = deamido-NAD(+) + diphosphate. It functions in the pathway cofactor biosynthesis; NAD(+) biosynthesis; deamido-NAD(+) from nicotinate D-ribonucleotide: step 1/1. Its function is as follows. Catalyzes the reversible adenylation of nicotinate mononucleotide (NaMN) to nicotinic acid adenine dinucleotide (NaAD). This chain is Probable nicotinate-nucleotide adenylyltransferase, found in Acidothermus cellulolyticus (strain ATCC 43068 / DSM 8971 / 11B).